Consider the following 303-residue polypeptide: B1 kinase (303 aa).

Belongs to the protein kinase superfamily. Ser/Thr protein kinase family. Poxviruses subfamily. Interacts with host JIP1; this interaction increases the amount of MAPK bound to JIP1 and subsequently increases the activity of transcription factors, such as JUN, that respond to these complexes. Interacts with protein OPG198; this interaction inhibits the repressive activity of OPG198 pseudokinase on viral replication factory formation. It depends on Mg(2+) as a cofactor. In terms of processing, autophosphorylated.

It is found in the virion. The protein resides in the host cytoplasm. It catalyses the reaction L-seryl-[protein] + ATP = O-phospho-L-seryl-[protein] + ADP + H(+). The catalysed reaction is L-threonyl-[protein] + ATP = O-phospho-L-threonyl-[protein] + ADP + H(+). In terms of biological role, essential serine/threonine-protein kinase that plays different role in the viral life cycle. Phosphorylates the host small ribosomal protein RACK1 thereby customizing the ribosomes to a state optimal for viral mRNAs (which contain poly-A leaders) but not for host mRNAs. Facilitates viral DNA replication by inhibiting host BANF1, a cellular host defense responsive to foreign DNA. Phosphorylates host BANF1 on serine and threonine residues; this leads to BANF1 relocalization to the cytoplasm, loss of dimerization and impaired DNA binding activity. Indeed, BANF1 activity depends on its DNA-binding property which is blocked by VPK1-mediated phosphorylation. Required for viral intermediate genes expression, probably by inhibiting host BANF1. Modulates cellular responses via host JUN by two different mechanisms, either by direct phosphorylation or by modulation of upstream JIP1-MAPK complexes. Seems to participate in the accumulation/processing of late proteins and thus in virion maturation. In addition, inhibits B12 repressive activity on viral DNA replication via a phosphorylation-dependent mechanism. In Cynomys gunnisoni (Gunnison's prairie dog), this protein is B1 kinase (OPG187).